The primary structure comprises 110 residues: Neural hemoglobin (110 aa).

The region spanning 2–110 is the Globin domain; sequence VNWAAVVDDF…HAIDDILSHL (109 aa). His-70 lines the heme pocket.

This sequence belongs to the globin family. As to quaternary structure, homotetramer. Self-associates in the deoxy state. Seems to dissociate upon oxygenation.

Its function is as follows. Acts as an oxygen store capable of sustaining neuronal activity in an anoxic environment for 5 to 30 minutes. The chain is Neural hemoglobin from Cerebratulus lacteus (Milky ribbon worm).